Here is a 182-residue protein sequence, read N- to C-terminus: Adenine phosphoribosyltransferase (182 aa).

It belongs to the purine/pyrimidine phosphoribosyltransferase family. As to quaternary structure, homodimer.

The protein resides in the cytoplasm. The enzyme catalyses AMP + diphosphate = 5-phospho-alpha-D-ribose 1-diphosphate + adenine. Its pathway is purine metabolism; AMP biosynthesis via salvage pathway; AMP from adenine: step 1/1. Catalyzes a salvage reaction resulting in the formation of AMP, that is energically less costly than de novo synthesis. The polypeptide is Adenine phosphoribosyltransferase (Stutzerimonas stutzeri (strain A1501) (Pseudomonas stutzeri)).